Here is a 2696-residue protein sequence, read N- to C-terminus: Histone-lysine N-methyltransferase, H3 lysine-36 specific (2696 aa).

A Phosphoserine modification is found at S117. Disordered stretches follow at residues 207–252 (MGSE…EKAA) and 281–311 (DPDS…PFCQ). Residues 236 to 248 (QKNKQRNEVDGSN) are compositionally biased toward basic and acidic residues. 2 stretches are compositionally biased toward polar residues: residues 281–290 (DPDSSTSTLG) and 297–306 (GTSSSSTSQE). The 66-residue stretch at 323 to 388 (VGDLIWAKFK…AGKAIVMFEG (66 aa)) folds into the PWWP 1 domain. Residues S483 and S486 each carry the phosphoserine modification. The tract at residues 487–514 (ADEKEKPCAKSRARKSSDNPKRTSVKKG) is disordered. S766 carries the post-translational modification Phosphoserine. The disordered stretch occupies residues 872-891 (LGEDVSDSGTSKPSKPLLFS). K906 participates in a covalent cross-link: Glycyl lysine isopeptide (Lys-Gly) (interchain with G-Cter in SUMO2). Disordered stretches follow at residues 936-1035 (YRSP…DAFS), 1067-1093 (VLQG…PLQI), 1112-1134 (SKVK…NGKG), 1243-1272 (SIGD…SEKK), 1294-1344 (PKKK…EPPV), 1382-1428 (SPRP…KKGD), and 1480-1534 (KMQC…MQGE). The segment covering 948–961 (SPVGVSKVLVSGGS) has biased composition (low complexity). Positions 971–982 (GTQNSANPSPSG) are enriched in polar residues. 3 stretches are compositionally biased toward basic and acidic residues: residues 1000-1017 (SDKR…DCVT), 1070-1090 (GDRE…KEDP), and 1112-1124 (SKVK…KISE). The segment covering 1300–1314 (KVQEQVHKVSSRCEE) has biased composition (basic and acidic residues). A compositionally biased stretch (polar residues) spans 1323–1337 (SSAQNKQVDENSLIS). K1339 is covalently cross-linked (Glycyl lysine isopeptide (Lys-Gly) (interchain with G-Cter in SUMO2)). A Phosphoserine modification is found at S1510. The segment covering 1513 to 1523 (ETVEEGVEHDP) has biased composition (basic and acidic residues). PHD-type zinc fingers lie at residues 1543–1589 (ENVC…CRTG), 1590–1646 (IHTC…CHAA), and 1707–1751 (VSWC…CKAG). Positions 1756-1818 (YREIVWVKVG…QARVFPYMEG (63 aa)) constitute a PWWP 2 domain. The region spanning 1890-1940 (SEIPRCNCKATDENPCGIDSECINRMLLYECHPTVCPAGGRCQNQCFSKRQ) is the AWS domain. The 118-residue stretch at 1942–2059 (PEVEIFRTLQ…AGTELTFNYN (118 aa)) folds into the SET domain. S-adenosyl-L-methionine is bound by residues 1952–1954 (RGW), 1994–1997 (TNFY), 2020–2021 (NH), N2065, and K2071. Residues 2060 to 2066 (LECLGNG) are inhibits enzyme activity in the absence of bound histone. The region spanning 2066–2082 (GKTVCKCGAPNCSGFLG) is the Post-SET domain. The segment at 2091 to 2111 (ATEEKSKKFKKKQQGKRRTQG) is disordered. The segment covering 2097 to 2108 (KKFKKKQQGKRR) has biased composition (basic residues). The segment at 2118–2165 (EDECFSCGDAGQLVSCKKPGCPKVYHADCLNLTKRPAGKWECPWHQCD) adopts a PHD-type 4; atypical zinc-finger fold. Positions 2213 to 2422 (LEPGEIREYV…SLSQRLPPPE (210 aa)) are disordered. A compositionally biased stretch (pro residues) spans 2222–2232 (VPPPVPLPPGP). Positions 2281–2298 (RPLERTDSRPQPLDKVRD) are enriched in basic and acidic residues. Over residues 2303–2314 (GTKSQSLVSSQR) the composition is skewed to polar residues. Low complexity predominate over residues 2330–2348 (SDKPSPVTSPSSSPSVRSQ). At S2369 the chain carries Phosphoserine. Composition is skewed to polar residues over residues 2371-2381 (RPQSLEKTSVP) and 2394-2404 (ITSSPKPQTSD). A Phosphothreonine modification is found at T2462. Disordered regions lie at residues 2464–2499 (RQKE…GLGH), 2553–2575 (TQAS…QSPG), 2595–2616 (KSGQ…EEKK), and 2665–2696 (LGRG…SEQK). S2471 is modified (phosphoserine). A Glycyl lysine isopeptide (Lys-Gly) (interchain with G-Cter in SUMO2) cross-link involves residue K2616. Over residues 2674-2686 (EQNTLPALNQAPS) the composition is skewed to polar residues.

The protein belongs to the class V-like SAM-binding methyltransferase superfamily. As to quaternary structure, interacts with the ligand-binding domains of RARA and THRA in the absence of ligand; in the presence of ligand the interaction is severely disrupted but some binding still occurs. Interacts with the ligand-binding domains of RXRA and ESRRA only in the presence of ligand. Interacts with ZNF496. Interacts with AR DNA- and ligand-binding domains. As to expression, expressed in the fetal/adult brain, kidney, skeletal muscle, spleen, and the thymus, and faintly in the lung.

It localises to the nucleus. The protein resides in the chromosome. The catalysed reaction is L-lysyl(36)-[histone H3] + 2 S-adenosyl-L-methionine = N(6),N(6)-dimethyl-L-lysyl(36)-[histone H3] + 2 S-adenosyl-L-homocysteine + 2 H(+). In terms of biological role, histone methyltransferase that dimethylates Lys-36 of histone H3 (H3K36me2). Transcriptional intermediary factor capable of both negatively or positively influencing transcription, depending on the cellular context. The polypeptide is Histone-lysine N-methyltransferase, H3 lysine-36 specific (NSD1) (Homo sapiens (Human)).